A 671-amino-acid polypeptide reads, in one-letter code: DNA ligase (671 aa).

NAD(+)-binding positions include 32–36 (DAEYD), 81–82 (SL), and E113. K115 functions as the N6-AMP-lysine intermediate in the catalytic mechanism. The NAD(+) site is built by R136, E173, K290, and K314. Residues C408, C411, C426, and C432 each coordinate Zn(2+). Positions 593–671 (EIDSPFAGKT…ETEMLRLLGS (79 aa)) constitute a BRCT domain.

It belongs to the NAD-dependent DNA ligase family. LigA subfamily. Requires Mg(2+) as cofactor. The cofactor is Mn(2+).

It carries out the reaction NAD(+) + (deoxyribonucleotide)n-3'-hydroxyl + 5'-phospho-(deoxyribonucleotide)m = (deoxyribonucleotide)n+m + AMP + beta-nicotinamide D-nucleotide.. Functionally, DNA ligase that catalyzes the formation of phosphodiester linkages between 5'-phosphoryl and 3'-hydroxyl groups in double-stranded DNA using NAD as a coenzyme and as the energy source for the reaction. It is essential for DNA replication and repair of damaged DNA. This Escherichia coli O6:H1 (strain CFT073 / ATCC 700928 / UPEC) protein is DNA ligase.